Here is a 1463-residue protein sequence, read N- to C-terminus: Probable oxidoreductase PXDNL (1463 aa).

An N-terminal signal peptide occupies residues 1-23 (MEPRLFCWTTLFLLAGWCLPGLP). The 27-residue stretch at 24–50 (CPSRCLCFKSTVRCMHLMLDHIPQVPQ) folds into the LRRNT domain. LRR repeat units follow at residues 51 to 72 (QTTV…AFKK), 75 to 96 (NLNT…AFEG), 99 to 120 (NLLY…TFKG), 123 to 144 (SLEH…TFGD), and 147 to 168 (RLER…SFSN). One can recognise an LRRCT domain in the interval 180-233 (NALVCDCDLMWLGELLQGFAQHGHTQAAATCEYPRRLHGRAVASVTVEEFNCQS). Ig-like C2-type domains are found at residues 234 to 322 (PRIT…AMLR), 330 to 414 (PSFV…ANII), 419 to 504 (PQFT…VQLT), and 507 to 596 (PKAL…MFLT). Cystine bridges form between Cys-255/Cys-305, Cys-351/Cys-398, Cys-440/Cys-488, Cys-532/Cys-580, and Cys-718/Cys-734. Asn-387 carries an N-linked (GlcNAc...) asparagine glycan. The active-site Proton acceptor is the His-812. Asp-813 provides a ligand contact to Ca(2+). 2 disulfide bridges follow: Cys-832/Cys-842 and Cys-836/Cys-859. Positions 891, 893, 895, and 897 each coordinate Ca(2+). Cys-944 and Cys-953 are joined by a disulfide. His-1057 is a heme b binding site. Cystine bridges form between Cys-1160/Cys-1217 and Cys-1258/Cys-1284. The VWFC domain occupies 1393 to 1451 (AGCTDVRGVPRKAEERWMKEDCTHCICESGQVTCVVEICPPAPCPSPELVKGTCCPVCR).

The protein belongs to the peroxidase family. XPO subfamily. In terms of assembly, interacts with PXDN; this interaction inhibits the peroxidase activity of PXDN. It depends on heme b as a cofactor. In terms of processing, phosphorylation by SRC on tyrosine residues is required for targeting to polysomes. As to expression, the 57 kDa isoform PMR1 is the only form detected at protein levels in human cell lines. Expressed in heart.

Its subcellular location is the secreted. The protein localises to the endoplasmic reticulum. The protein resides in the cell membrane. It is found in the cytoplasm. In terms of biological role, probable oxidoreductase. Lacks peroxidase activity. Inhibits the peroxidase activity of PXDN through its interaction. Endonuclease selectively degrading some target mRNAs while they are engaged by translating ribosomes, among which albumin and beta-globin mRNAs. This chain is Probable oxidoreductase PXDNL, found in Homo sapiens (Human).